A 351-amino-acid polypeptide reads, in one-letter code: MSLQWWRDTCREADPQMRRRAAERQDRLTKPRGSLGRLEQVAIDLAALQGRERPSLERIWVTVFAGDHGVVAEGISAYPQAVTGEMLRNFVRGGAAISVLARELGAGLEVVDLGTAFPLEALPGVRHLRLAAGTANFVEAPAMGAEQCLLALEAGRESVRRAEQAGSQLFIGGEMGIGNTTAAAAMACALLDAPASALVGPGTGLDASGVAHKAAVIERALALHGAHRADPFETLRRLGGLEIAALAGAYLACAQKGMVALVDGYICSVAALCAVRLNPACRDWLLFAHSGAEPGHRHVLEALAAQPLLDLGLRLGEGSGAALAVPLLRQACVLHAGMATFAEAAVSDRPA.

Glutamate 317 (proton acceptor) is an active-site residue.

Belongs to the CobT family.

It carries out the reaction 5,6-dimethylbenzimidazole + nicotinate beta-D-ribonucleotide = alpha-ribazole 5'-phosphate + nicotinate + H(+). It functions in the pathway nucleoside biosynthesis; alpha-ribazole biosynthesis; alpha-ribazole from 5,6-dimethylbenzimidazole: step 1/2. In terms of biological role, catalyzes the synthesis of alpha-ribazole-5'-phosphate from nicotinate mononucleotide (NAMN) and 5,6-dimethylbenzimidazole (DMB). This chain is Nicotinate-nucleotide--dimethylbenzimidazole phosphoribosyltransferase, found in Pseudomonas aeruginosa (strain LESB58).